Reading from the N-terminus, the 118-residue chain is MRIKLSVNSEKCRKKAMQVAVAADGVTSVAMEGEFQDELVVVGDGVDSASLIMALRKKACHVTLETLEEVKKPQVEEKSITPHCCIAQCPVVSNEQPRPEVYRIVHDSYGPTTGCLVM.

Positions 1-67 (MRIKLSVNSE…KACHVTLETL (67 aa)) constitute an HMA domain. Position 115 is a cysteine methyl ester (Cys-115). Cys-115 carries the S-farnesyl cysteine lipid modification. The propeptide at 116-118 (LVM) is removed in mature form.

It belongs to the HIPP family.

In terms of biological role, heavy-metal-binding protein. The sequence is that of Heavy metal-associated isoprenylated plant protein 47 from Arabidopsis thaliana (Mouse-ear cress).